Reading from the N-terminus, the 161-residue chain is Glycine/sarcosine/betaine reductase complex component A2 (161 aa).

U42 is an active-site residue. Position 42 (U42) is a non-standard amino acid, selenocysteine.

The protein belongs to the GrdA family. In terms of assembly, monomer. Component of the glycine, sarcosine and betaine reductase complexes, together with components B and C.

The enzyme catalyses acetyl phosphate + [thioredoxin]-disulfide + NH4(+) + H2O = [thioredoxin]-dithiol + glycine + phosphate + H(+). The catalysed reaction is acetyl phosphate + methylamine + [thioredoxin]-disulfide + H2O = sarcosine + [thioredoxin]-dithiol + phosphate + H(+). It carries out the reaction acetyl phosphate + trimethylamine + [thioredoxin]-disulfide + H2O = glycine betaine + [thioredoxin]-dithiol + phosphate + H(+). Its function is as follows. In the first step of glycine, betaine and sarcosine reductases, the substrate is bound to component PB via a Schiff base intermediate. Then the PB-activated substrate is nucleophilically attacked by the selenol anion of component PA to transform it to a carboxymethylated selenoether and the respective amine. By action of component PC, acetyl phosphate is formed, leaving component PA in its oxidized state. Finally component PA becomes reduced by the thioredoxin system to start a new catalytic cycle of reductive deamination. This chain is Glycine/sarcosine/betaine reductase complex component A2 (grdA2), found in Photobacterium profundum (strain SS9).